The sequence spans 340 residues: Phosphoribosylformylglycinamidine cyclo-ligase (340 aa).

This sequence belongs to the AIR synthase family.

It is found in the cytoplasm. The catalysed reaction is 2-formamido-N(1)-(5-O-phospho-beta-D-ribosyl)acetamidine + ATP = 5-amino-1-(5-phospho-beta-D-ribosyl)imidazole + ADP + phosphate + H(+). It participates in purine metabolism; IMP biosynthesis via de novo pathway; 5-amino-1-(5-phospho-D-ribosyl)imidazole from N(2)-formyl-N(1)-(5-phospho-D-ribosyl)glycinamide: step 2/2. The polypeptide is Phosphoribosylformylglycinamidine cyclo-ligase (Streptococcus agalactiae serotype V (strain ATCC BAA-611 / 2603 V/R)).